The sequence spans 436 residues: Ribosomal protein uS12 methylthiotransferase RimO (436 aa).

Residues 2–117 enclose the MTTase N-terminal domain; that stretch reads RNVGIISLGC…IVDVIEEVKK (116 aa). Residues C11, C47, C80, C154, C158, and C161 each contribute to the [4Fe-4S] cluster site. The Radical SAM core domain maps to 140–369; it reads TTPPYYAYLK…MEIQKQISYE (230 aa). The TRAM domain occupies 372-436; the sequence is MSKIGTKLEV…AFEYDLVGEY (65 aa).

This sequence belongs to the methylthiotransferase family. RimO subfamily. [4Fe-4S] cluster is required as a cofactor.

Its subcellular location is the cytoplasm. It carries out the reaction L-aspartate(89)-[ribosomal protein uS12]-hydrogen + (sulfur carrier)-SH + AH2 + 2 S-adenosyl-L-methionine = 3-methylsulfanyl-L-aspartate(89)-[ribosomal protein uS12]-hydrogen + (sulfur carrier)-H + 5'-deoxyadenosine + L-methionine + A + S-adenosyl-L-homocysteine + 2 H(+). Its function is as follows. Catalyzes the methylthiolation of an aspartic acid residue of ribosomal protein uS12. The protein is Ribosomal protein uS12 methylthiotransferase RimO of Caldanaerobacter subterraneus subsp. tengcongensis (strain DSM 15242 / JCM 11007 / NBRC 100824 / MB4) (Thermoanaerobacter tengcongensis).